Reading from the N-terminus, the 556-residue chain is 2-isopropylmalate synthase (556 aa).

Positions P33–D307 constitute a Pyruvate carboxyltransferase domain. Mg(2+) is bound by residues D42, H246, H248, and N282. The regulatory domain stretch occupies residues A439–A556.

Belongs to the alpha-IPM synthase/homocitrate synthase family. LeuA type 2 subfamily. In terms of assembly, homodimer. Mg(2+) is required as a cofactor.

The protein localises to the cytoplasm. The catalysed reaction is 3-methyl-2-oxobutanoate + acetyl-CoA + H2O = (2S)-2-isopropylmalate + CoA + H(+). Its pathway is amino-acid biosynthesis; L-leucine biosynthesis; L-leucine from 3-methyl-2-oxobutanoate: step 1/4. Catalyzes the condensation of the acetyl group of acetyl-CoA with 3-methyl-2-oxobutanoate (2-ketoisovalerate) to form 3-carboxy-3-hydroxy-4-methylpentanoate (2-isopropylmalate). This chain is 2-isopropylmalate synthase, found in Pseudomonas aeruginosa (strain ATCC 15692 / DSM 22644 / CIP 104116 / JCM 14847 / LMG 12228 / 1C / PRS 101 / PAO1).